Here is a 506-residue protein sequence, read N- to C-terminus: 2-isopropylmalate synthase (506 aa).

Positions 6–267 (IIVFDTTLRD…YTDIVTKEIY (262 aa)) constitute a Pyruvate carboxyltransferase domain. Asp-15, His-201, His-203, and Asn-237 together coordinate Mn(2+). A regulatory domain region spans residues 391 to 506 (SIQTLSTSSC…LNSYLSMKNR (116 aa)).

This sequence belongs to the alpha-IPM synthase/homocitrate synthase family. LeuA type 1 subfamily. As to quaternary structure, homodimer. Mn(2+) is required as a cofactor.

It localises to the cytoplasm. It carries out the reaction 3-methyl-2-oxobutanoate + acetyl-CoA + H2O = (2S)-2-isopropylmalate + CoA + H(+). Its pathway is amino-acid biosynthesis; L-leucine biosynthesis; L-leucine from 3-methyl-2-oxobutanoate: step 1/4. Its function is as follows. Catalyzes the condensation of the acetyl group of acetyl-CoA with 3-methyl-2-oxobutanoate (2-ketoisovalerate) to form 3-carboxy-3-hydroxy-4-methylpentanoate (2-isopropylmalate). This Campylobacter fetus subsp. fetus (strain 82-40) protein is 2-isopropylmalate synthase.